A 605-amino-acid polypeptide reads, in one-letter code: DNA primase (605 aa).

The segment at 38 to 62 adopts a CHC2-type zinc-finger fold; the sequence is CPFHDEKTPSFTVSEDKQICHCFGC. One can recognise a Toprim domain in the interval 260 to 341; sequence DEIVLLEGFM…NVFVIQLPSG (82 aa). Positions 266, 310, and 312 each coordinate Mg(2+).

It belongs to the DnaG primase family. Monomer. Interacts with DnaB. The cofactor is Zn(2+). Mg(2+) serves as cofactor.

The catalysed reaction is ssDNA + n NTP = ssDNA/pppN(pN)n-1 hybrid + (n-1) diphosphate.. RNA polymerase that catalyzes the synthesis of short RNA molecules used as primers for DNA polymerase during DNA replication. In Staphylococcus aureus, this protein is DNA primase.